A 249-amino-acid polypeptide reads, in one-letter code: Putative [LysW]-aminoadipate/[LysW]-glutamate kinase (249 aa).

The substrate site is built by arginine 63 and asparagine 166.

The protein belongs to the acetylglutamate kinase family. LysZ subfamily.

The protein resides in the cytoplasm. The enzyme catalyses [amino-group carrier protein]-C-terminal-N-(1,4-dicarboxybutan-1-yl)-L-glutamine + ATP = [amino-group carrier protein]-C-terminal-N-(1-carboxy-5-phosphooxy-5-oxopentan-1-yl)-L-glutamine + ADP. The catalysed reaction is [amino-group carrier protein]-C-terminal-gamma-(L-glutamyl)-L-glutamate + ATP = [amino-group carrier protein]-C-terminal-gamma-(5-phospho-L-glutamyl)-L-glutamate + ADP. Its pathway is amino-acid biosynthesis; L-lysine biosynthesis via AAA pathway; L-lysine from L-alpha-aminoadipate (Thermus route): step 2/5. It participates in amino-acid biosynthesis; L-arginine biosynthesis. Involved in both the arginine and lysine biosynthetic pathways. Phosphorylates the LysW-bound precursors glutamate (for arginine biosynthesis), respectively alpha-aminoadipate (for lysine biosynthesis). This chain is Putative [LysW]-aminoadipate/[LysW]-glutamate kinase, found in Pyrococcus furiosus (strain ATCC 43587 / DSM 3638 / JCM 8422 / Vc1).